Reading from the N-terminus, the 404-residue chain is Probable tRNA sulfurtransferase (404 aa).

The 106-residue stretch at 60–165 folds into the THUMP domain; that stretch reads QPIVEALKLV…DEAAYISYEE (106 aa). ATP-binding positions include 183–184, 208–209, R265, G287, and Q296; these read ML and HF.

It belongs to the ThiI family.

It is found in the cytoplasm. The catalysed reaction is [ThiI sulfur-carrier protein]-S-sulfanyl-L-cysteine + a uridine in tRNA + 2 reduced [2Fe-2S]-[ferredoxin] + ATP + H(+) = [ThiI sulfur-carrier protein]-L-cysteine + a 4-thiouridine in tRNA + 2 oxidized [2Fe-2S]-[ferredoxin] + AMP + diphosphate. The enzyme catalyses [ThiS sulfur-carrier protein]-C-terminal Gly-Gly-AMP + S-sulfanyl-L-cysteinyl-[cysteine desulfurase] + AH2 = [ThiS sulfur-carrier protein]-C-terminal-Gly-aminoethanethioate + L-cysteinyl-[cysteine desulfurase] + A + AMP + 2 H(+). It functions in the pathway cofactor biosynthesis; thiamine diphosphate biosynthesis. Its function is as follows. Catalyzes the ATP-dependent transfer of a sulfur to tRNA to produce 4-thiouridine in position 8 of tRNAs, which functions as a near-UV photosensor. Also catalyzes the transfer of sulfur to the sulfur carrier protein ThiS, forming ThiS-thiocarboxylate. This is a step in the synthesis of thiazole, in the thiamine biosynthesis pathway. The sulfur is donated as persulfide by IscS. This Streptococcus pyogenes serotype M2 (strain MGAS10270) protein is Probable tRNA sulfurtransferase.